Reading from the N-terminus, the 1521-residue chain is Retroelement silencing factor 1 (1521 aa).

Lys223 participates in a covalent cross-link: Glycyl lysine isopeptide (Lys-Gly) (interchain with G-Cter in SUMO2). Positions Glu621 to Lys640 are disordered. Position 910 is a phosphoserine (Ser910). At Thr996 the chain carries Phosphothreonine. Composition is skewed to polar residues over residues Lys1093–Ser1105 and Leu1124–Ser1142. Disordered stretches follow at residues Lys1093 to Lys1147, Glu1204 to Arg1230, and Glu1312 to Met1335. The residue at position 1142 (Ser1142) is a Phosphoserine. Residues Pro1214–Ser1228 are compositionally biased toward low complexity. The segment covering Gly1325–Met1335 has biased composition (basic and acidic residues). Residue Lys1411 forms a Glycyl lysine isopeptide (Lys-Gly) (interchain with G-Cter in SUMO2) linkage. 2 disordered regions span residues Asp1425–Ser1444 and Ile1457–Glu1485. Residues Ser1467–Leu1476 show a composition bias toward basic and acidic residues. A phosphoserine mark is found at Ser1482 and Ser1514.

As to quaternary structure, interacts with SETDB1.

It is found in the nucleus. Plays a role in the regulation of imprinted gene expression, regulates repressive epigenetic modifications associated with SETDB1. Required for the recruitment or accumulation of SETDB1 to the endogenous retroviruses (ERVs) and maintenance of repressive chromatin configuration, contributing to a subset of the SETDB1-dependent ERV silencing in embryonic stem cells. This Mus musculus (Mouse) protein is Retroelement silencing factor 1.